The following is a 1036-amino-acid chain: MASSPPKKTLNSQSSSLSRPPQAVKFGRRTSSGRIVSLSRDDDMDVSGDYSGQNDYINYTVLMPPTPDNQPAGSSGSTSESKGDANRGGGGGDGPKMGNKLERRLSVMKSNNKSMLLRSQTGDFDHNRWLFESKGKYGIGNAFWSEEDDTYDGGVSKSDFLDKPWKPLTRKVQIPAKILSPYRLLIVIRLVIVFFFLWWRITNPNEDAMWLWGLSIVCEIWFAFSWILDILPKLNPINRATDLAALHDKFEQPSPSNPTGRSDLPGVDVFVSTADPEKEPPLVTANTLLSILAVDYPIEKLSAYISDDGGAILTFEAMAEAVRFAEYWVPFCRKHDIEPRNPDSYFSIKKDPTKNKKRQDFVKDRRWIKREYDEFKVRINGLPEQIKKRAEQFNMREELKEKRIAREKNGGVLPPDGVEVVKATWMADGTHWPGTWFEPKPDHSKGDHAGILQIMSKVPDLEPVMGGPNEGALDFTGIDIRVPMFAYVSREKRPGFDHNKKAGAMNGMVRASAILSNGAFILNLDCDHYIYNSKAIKEGMCFMMDRGGDRICYIQFPQRFEGIDPSDRYANHNTVFFDGNMRALDGLQGPVYVGTGCMFRRYALYGFNPPRANEYSGVFGQEKAPAMHVRTQSQASQTSQASDLESDTQPLNDDPDLGLPKKFGNSTMFTDTIPVAEYQGRPLADHMSVKNGRPPGALLLPRPPLDAPTVAEAIAVISCWYEDNTEWGDRIGWIYGSVTEDVVTGYRMHNRGWRSVYCITKRDAFRGTAPINLTDRLHQVLRWATGSVEIFFSKNNAMFATRRLKFLQRVAYLNVGIYPFTSIFLVVYCFLPALCLFSGKFIVQSLDIHFLSYLLCITVTLTLISLLEVKWSGIGLEEWWRNEQFWLIGGTSAHLAAVVQGLLKVIAGIEISFTLTSKASGEDEDDIFADLYIVKWTGLFIMPLTIIIVNLVAIVIGASRTIYSVIPQWGKLMGGIFFSLWVLTHMYPFAKGLMGRRGKVPTIVYVWSGLVSITVSLLWITISPPDDVSGSGGISV.

The segment at 1 to 99 is disordered; that stretch reads MASSPPKKTL…GGGDGPKMGN (99 aa). Polar residues-rich tracts occupy residues 9–19 and 69–80; these read TLNSQSSSLSR and NQPAGSSGSTSE. Residues 86-95 show a composition bias toward gly residues; it reads NRGGGGGDGP. Helical transmembrane passes span 178-198 and 208-228; these read ILSPYRLLIVIRLVIVFFFLW and AMWLWGLSIVCEIWFAFSWIL. Asp-308 is an active-site residue. The interval 626 to 665 is disordered; it reads AMHVRTQSQASQTSQASDLESDTQPLNDDPDLGLPKKFGN. The segment covering 631–642 has biased composition (low complexity); that stretch reads TQSQASQTSQAS. Asp-741 is an active-site residue. The next 6 membrane-spanning stretches (helical) occupy residues 817 to 837, 848 to 868, 895 to 915, 938 to 958, 962 to 982, and 1002 to 1022; these read IYPFTSIFLVVYCFLPALCLF, IHFLSYLLCITVTLTLISLLE, LAAVVQGLLKVIAGIEISFTL, GLFIMPLTIIIVNLVAIVIGA, IYSVIPQWGKLMGGIFFSLWV, and TIVYVWSGLVSITVSLLWITI.

It belongs to the glycosyltransferase 2 family. Plant cellulose synthase-like D subfamily.

The protein resides in the golgi apparatus membrane. Functionally, thought to be a Golgi-localized beta-glycan synthase that polymerize the backbones of noncellulosic polysaccharides (hemicelluloses) of plant cell wall. This Arabidopsis thaliana (Mouse-ear cress) protein is Cellulose synthase-like protein D1 (CSLD1).